We begin with the raw amino-acid sequence, 512 residues long: 2,3-bisphosphoglycerate-independent phosphoglycerate mutase (512 aa).

The Mn(2+) site is built by D11 and S61. S61 acts as the Phosphoserine intermediate in catalysis. Substrate is bound by residues H122, 152–153 (RD), R184, R190, 259–262 (RADR), and K332. Mn(2+) contacts are provided by D399, H403, D440, H441, and H459.

It belongs to the BPG-independent phosphoglycerate mutase family. As to quaternary structure, monomer. Requires Mn(2+) as cofactor.

It catalyses the reaction (2R)-2-phosphoglycerate = (2R)-3-phosphoglycerate. Its pathway is carbohydrate degradation; glycolysis; pyruvate from D-glyceraldehyde 3-phosphate: step 3/5. Catalyzes the interconversion of 2-phosphoglycerate and 3-phosphoglycerate. This Francisella tularensis subsp. tularensis (strain FSC 198) protein is 2,3-bisphosphoglycerate-independent phosphoglycerate mutase.